The primary structure comprises 718 residues: Polyribonucleotide nucleotidyltransferase (718 aa).

Mg(2+) is bound by residues aspartate 491 and aspartate 497. A KH domain is found at 558 to 617; the sequence is PRMLTIKINPEKIRDVIGKGGATIRALTEETGTQIDISDDGTIVIASVDEGQAKEAQRRI. In terms of domain architecture, S1 motif spans 627-695; that stretch reads GQVYDGSVLR…EKGRLRLSVK (69 aa).

Belongs to the polyribonucleotide nucleotidyltransferase family. Requires Mg(2+) as cofactor.

The protein localises to the cytoplasm. The enzyme catalyses RNA(n+1) + phosphate = RNA(n) + a ribonucleoside 5'-diphosphate. In terms of biological role, involved in mRNA degradation. Catalyzes the phosphorolysis of single-stranded polyribonucleotides processively in the 3'- to 5'-direction. This Bordetella avium (strain 197N) protein is Polyribonucleotide nucleotidyltransferase.